The sequence spans 122 residues: Ribosome-binding factor A (122 aa).

This sequence belongs to the RbfA family. In terms of assembly, monomer. Binds 30S ribosomal subunits, but not 50S ribosomal subunits or 70S ribosomes.

It localises to the cytoplasm. One of several proteins that assist in the late maturation steps of the functional core of the 30S ribosomal subunit. Associates with free 30S ribosomal subunits (but not with 30S subunits that are part of 70S ribosomes or polysomes). Required for efficient processing of 16S rRNA. May interact with the 5'-terminal helix region of 16S rRNA. The sequence is that of Ribosome-binding factor A from Pelagibacter ubique (strain HTCC1062).